The sequence spans 203 residues: EVTKPETINYRTLKPEMDGLFCERIFGPAKDWECHCGKYKRVRHRGIVCERCGVEVTESRVRRHRMGYIKLAAPVTHVWYLKGIPSYISILLDMPLRDVEQIVYFNSYVVLDPGNHPELQTKQLLTEDQSMELEDQIYAEDSTLEGIEVGIGAEALERLLQDLELEQDAERLREEINSAKGQKRAKLIKRLRVVDNFVATGSH.

Positions 34, 36, 49, and 52 each coordinate Zn(2+).

This sequence belongs to the RNA polymerase beta' chain family. RpoC1 subfamily. As to quaternary structure, in cyanobacteria the RNAP catalytic core is composed of 2 alpha, 1 beta, 1 beta', 1 gamma and 1 omega subunit. When a sigma factor is associated with the core the holoenzyme is formed, which can initiate transcription. It depends on Zn(2+) as a cofactor.

The catalysed reaction is RNA(n) + a ribonucleoside 5'-triphosphate = RNA(n+1) + diphosphate. Functionally, DNA-dependent RNA polymerase catalyzes the transcription of DNA into RNA using the four ribonucleoside triphosphates as substrates. In Prochlorothrix hollandica, this protein is DNA-directed RNA polymerase subunit gamma (rpoC1).